Reading from the N-terminus, the 671-residue chain is Probable potassium transport system protein Kup 2 (671 aa).

12 consecutive transmembrane segments (helical) span residues 18–38, 60–80, 103–123, 149–169, 173–193, 218–238, 252–272, 292–312, 343–363, 373–393, 402–422, and 424–444; these read GFLI…LYAM, VSLV…LIAL, WLIV…ALTP, VTTL…ASLV, FGPI…INSF, AGFF…ALYS, WPFV…WLLA, MVIY…QALI, LYIP…VLYF, YSLA…YFLI, IAFI…ASLV, and FING…VMFI.

Belongs to the HAK/KUP transporter (TC 2.A.72) family.

It localises to the cell membrane. It carries out the reaction K(+)(in) + H(+)(in) = K(+)(out) + H(+)(out). Transport of potassium into the cell. Likely operates as a K(+):H(+) symporter. The sequence is that of Probable potassium transport system protein Kup 2 from Lactococcus lactis subsp. cremoris (strain SK11).